A 1360-amino-acid chain; its full sequence is Probable inactive protein kinase DDB_G0270444 (1360 aa).

WD repeat units follow at residues 44-83 (SSKR…IKQL), 109-152 (IRNI…AVYN), 166-205 (TTSA…IMGT), and 208-247 (GHSR…QITG). One can recognise a Protein kinase domain in the interval 636 to 954 (EKSIQTYLSN…IEQALSHPFI (319 aa)). Over residues 959-979 (KQQQQQQQQKQQQQQQQQQQQ) the composition is skewed to low complexity. 3 disordered regions span residues 959 to 989 (KQQQ…DSLT), 1258 to 1311 (IISE…VEEE), and 1331 to 1360 (EVEE…SNDF). 2 coiled-coil regions span residues 1014–1269 (SKIK…QEGE) and 1297–1352 (NASD…QVED). The segment covering 1291 to 1300 (LERDNKNASD) has biased composition (basic and acidic residues). Acidic residues-rich tracts occupy residues 1301-1311 (HDDEQQFVEEE) and 1331-1354 (EVEE…EDDT).

Belongs to the protein kinase superfamily. CMGC Ser/Thr protein kinase family.

The polypeptide is Probable inactive protein kinase DDB_G0270444 (Dictyostelium discoideum (Social amoeba)).